Consider the following 634-residue polypeptide: Glutathione S-transferase C-terminal domain-containing protein (634 aa).

One can recognise a GST C-terminal domain in the interval 131–333 (LGFKKTCLKA…QEVPKVKTAA (203 aa)). Residues 189 to 233 (RVHNDDKLRRQKLKQQKAAGSEPPSGKGKAKSKASAQKTPKDLAA) form a disordered region. The segment covering 204 to 226 (QKAAGSEPPSGKGKAKSKASAQK) has biased composition (low complexity).

Belongs to the GSTCD family.

Its subcellular location is the cytoplasm. The protein is Glutathione S-transferase C-terminal domain-containing protein (Gstcd) of Mus musculus (Mouse).